The following is a 117-amino-acid chain: Anti-sigma F factor antagonist (117 aa).

An STAS domain is found at 3–113; the sequence is LQIEMEHHRG…DNEVNALTEL (111 aa). S58 is modified (phosphoserine).

This sequence belongs to the anti-sigma-factor antagonist family. Phosphorylated by SpoIIAB on a serine residue.

In terms of biological role, in the phosphorylated form it could act as an anti-anti-sigma factor that counteracts SpoIIAB and thus releases sigma f from inhibition. The chain is Anti-sigma F factor antagonist (spoIIAA) from Paenibacillus polymyxa (Bacillus polymyxa).